A 207-amino-acid polypeptide reads, in one-letter code: uncharacterized protein (207 aa).

The protein localises to the mitochondrion. This is an uncharacterized protein from Marchantia polymorpha (Common liverwort).